A 214-amino-acid polypeptide reads, in one-letter code: Scytalone dehydratase-like protein mdpB (214 aa).

Residues Tyr40 and Tyr60 each contribute to the substrate site. Active-site residues include His95 and His120.

This sequence belongs to the scytalone dehydratase family.

The protein operates within secondary metabolite biosynthesis. In terms of biological role, scytalone dehydratase-like protein; part of the gene cluster that mediates the biosynthesis of monodictyphenone, a prenyl xanthone derivative. The pathway begins with the synthesis of atrochrysone thioester by the polyketide synthase (PKS) mdpG. The atrochrysone carboxyl ACP thioesterase mdpF then breaks the thioester bond and releases the atrochrysone carboxylic acid from mdpG. The atrochrysone carboxylic acid is then converted to atrochrysone which is further transformed into emodin anthrone. The next step is performed by the anthrone oxygenase mdpH that catalyzes the oxidation of emodinanthrone to emodin. Emodin is further modified to yield monodictyphenone via several steps involving mdpB, mdpC mdpJ, mdpK and mdpL. These enzymes with xptA, xptB and xptC are also proposed to be involved in the synthesis of shamixanthone from emodin. Especially, direct reduction of emodin by the short chain dehydrogenase mdpC followed by dehydration catalyzed by the scytalone dehydratase-like protein mdpB gives loss of oxygen and formation of chrysophanol intermediate in two simple steps. The polypeptide is Scytalone dehydratase-like protein mdpB (Emericella nidulans (strain FGSC A4 / ATCC 38163 / CBS 112.46 / NRRL 194 / M139) (Aspergillus nidulans)).